A 367-amino-acid chain; its full sequence is Flagellar P-ring protein (367 aa).

Residues methionine 1–alanine 21 form the signal peptide.

Belongs to the FlgI family. In terms of assembly, the basal body constitutes a major portion of the flagellar organelle and consists of four rings (L,P,S, and M) mounted on a central rod.

It is found in the periplasm. Its subcellular location is the bacterial flagellum basal body. Assembles around the rod to form the L-ring and probably protects the motor/basal body from shearing forces during rotation. This chain is Flagellar P-ring protein, found in Salmonella paratyphi C (strain RKS4594).